Consider the following 277-residue polypeptide: Sulfur carrier protein FdhD (277 aa).

Catalysis depends on C121, which acts as the Cysteine persulfide intermediate. 260–265 contacts Mo-bis(molybdopterin guanine dinucleotide); the sequence is FCKPGR.

This sequence belongs to the FdhD family.

The protein localises to the cytoplasm. Its function is as follows. Required for formate dehydrogenase (FDH) activity. Acts as a sulfur carrier protein that transfers sulfur from IscS to the molybdenum cofactor prior to its insertion into FDH. This Escherichia coli O6:K15:H31 (strain 536 / UPEC) protein is Sulfur carrier protein FdhD.